Consider the following 314-residue polypeptide: Curved DNA-binding protein (314 aa).

Residues 5 to 69 enclose the J domain; the sequence is DYYKILDVEP…EKRAEYDELR (65 aa). A disordered region spans residues 73-92; that stretch reads RQGRPFQTPPGWQSRAGAGA.

The protein localises to the cytoplasm. It localises to the nucleoid. In terms of biological role, DNA-binding protein that preferentially recognizes a curved DNA sequence. It is probably a functional analog of DnaJ; displays overlapping activities with DnaJ, but functions under different conditions, probably acting as a molecular chaperone in an adaptive response to environmental stresses other than heat shock. Lacks autonomous chaperone activity; binds native substrates and targets them for recognition by DnaK. Its activity is inhibited by the binding of CbpM. The sequence is that of Curved DNA-binding protein from Pseudomonas syringae pv. tomato (strain ATCC BAA-871 / DC3000).